The following is a 251-amino-acid chain: Flap endonuclease Xni (251 aa).

Aspartate 104 serves as a coordination point for Mg(2+). The 5'-3' exonuclease domain maps to 160–249; the sequence is VSPGQLADFW…LDGNLQQLRL (90 aa). Positions 171, 172, 180, 182, and 185 each coordinate K(+). The segment at 184–189 is interaction with DNA; it reads GIGPKS.

The protein belongs to the Xni family. The cofactor is Mg(2+). K(+) serves as cofactor.

Its function is as follows. Has flap endonuclease activity. During DNA replication, flap endonucleases cleave the 5'-overhanging flap structure that is generated by displacement synthesis when DNA polymerase encounters the 5'-end of a downstream Okazaki fragment. This chain is Flap endonuclease Xni, found in Cronobacter sakazakii (strain ATCC BAA-894) (Enterobacter sakazakii).